A 178-amino-acid chain; its full sequence is uncharacterized protein (178 aa).

A helical membrane pass occupies residues 7-29; that stretch reads FFVIFSILWGSLFLFSIIGSLGT.

The protein resides in the membrane. This is an uncharacterized protein from Bacillus subtilis (strain 168).